Reading from the N-terminus, the 346-residue chain is L-glyceraldehyde 3-phosphate reductase (346 aa).

NADP(+) contacts are provided by Trp33, Asp61, Tyr66, Ser168, Gln193, Thr223, Leu225, Gln227, Lys233, Ser303, Gln307, and Asn311.

The protein belongs to the shaker potassium channel beta subunit family.

The catalysed reaction is a primary alcohol + NADP(+) = an aldehyde + NADPH + H(+). Aldo-keto reductase that catalyzes the stereospecific, NADPH-dependent reduction of L-glyceraldehyde 3-phosphate (L-GAP) to L-glycerol 3-phosphate (L-G3P). This Escherichia coli O157:H7 protein is L-glyceraldehyde 3-phosphate reductase.